A 391-amino-acid chain; its full sequence is Probable methanogen homoaconitase large subunit (391 aa).

[4Fe-4S] cluster-binding residues include Cys275, Cys333, and Cys336.

It belongs to the aconitase/IPM isomerase family. LeuC type 2 subfamily. In terms of assembly, heterotetramer of 2 HacA and 2 HacB proteins.

The catalysed reaction is (2R)-homocitrate = (2R,3S)-homoisocitrate. It catalyses the reaction (2R)-homocitrate = cis-homoaconitate + H2O. It carries out the reaction (2R,3S)-homoisocitrate = cis-homoaconitate + H2O. The enzyme catalyses cis-(homo)2aconitate + H2O = (2R,3S)-iso(homo)2citrate. The catalysed reaction is cis-(homo)3aconitate + H2O = (2R,3S)-iso(homo)3citrate. Its pathway is organic acid metabolism; 2-oxosuberate biosynthesis. In terms of biological role, component of a hydro-lyase with broad substrate specificity for cis-unsaturated tricarboxylic acids. Catalyzes both the reversible dehydration of (R)-homocitrate ((R)-2-hydroxybutane-1,2,4-tricarboxylate) to produce cis-homoaconitate ((Z)-but-1-ene-1,2,4-tricarboxylate), and its hydration to homoisocitrate ((1R,2S)-1-hydroxybutane-1,2,4-tricarboxylate). Is also able to hydrate the analogous longer chain substrates cis-homo(2)-aconitate, cis-homo(3)-aconitate. These reactions are part of the biosynthesis pathway of coenzyme B. The chain is Probable methanogen homoaconitase large subunit (hacA) from Methanosarcina mazei (strain ATCC BAA-159 / DSM 3647 / Goe1 / Go1 / JCM 11833 / OCM 88) (Methanosarcina frisia).